Consider the following 772-residue polypeptide: MNPEERVVTWLISLGVLESPKKTICDPEEFLKSSLKNGVVLCKLISRLLPGSVEKYCQEPQTEADCIDNINDFLKGCATLQVEVFEPDDLYSGANFSKVLNTLLAVNKATEDQLSERPCGRSSSLSATTSSQTNPQAAVPSTTPEQQSEEKAAEMTENGSHQLIVKARFNFKQTNEDELSVCKGDIIYVTRVEEGGWWEGTLNGRTGWFPSNYVREIKPSERPLSPKAVKGFDTAPLTKNYYTVVLQNILDTEKEYAKELQSLLVTYLRPLQSNNNLSTVEFTCLLGNFEEVCTFQQTLCQALEECSKSPENQHKVGGCLLNLMPHFKSMYLAYCANHPSAVNVLTQHSDDLERFMENQGASSPGILILTTSLSKPFMRLEKYVTLLQELERHMEDTHPDHQDILKAIIAFKSLMGQCQDLRKRKQLELQILSEPIQAWEGDDIKTLGNVIFMSQVVMQHGACEEKEERYFLLFSSVLIMLSASPRMSGFMYQGKVPIAGMVVTRLDEIEGNDCTFEITGSTVERIVVHCNNNQDFQEWMEQLNRLTKGPASCSSLSKTSSSSCSTHSSFSSTGQPRGPLEPPQIIKPWSLSCLRPAPPLRPSAALGYKERMSYILKESSKSPKTMKKFLHKRKTERKTSEEEYVIRKSTAALEEDAQILKVIEAYCTSASFQQGTRKDSVPQVLLPEEEKLIIEETRSNGQTIIEEKSLVDTVYALKDEVKELKQENKKMKQCLEEELKSRKDLEKLVRKLLKQTDESIRAESSSKTSILQ.

One can recognise a Calponin-homology (CH) domain in the interval 1–111 (MNPEERVVTW…TLLAVNKATE (111 aa)). Positions 115-158 (SERPCGRSSSLSATTSSQTNPQAAVPSTTPEQQSEEKAAEMTEN) are disordered. Residues 122–133 (SSSLSATTSSQT) are compositionally biased toward low complexity. A Phosphoserine modification is found at serine 126. Threonine 133 bears the Phosphothreonine mark. Polar residues predominate over residues 134-146 (NPQAAVPSTTPEQ). The 60-residue stretch at 160–219 (SHQLIVKARFNFKQTNEDELSVCKGDIIYVTRVEEGGWWEGTLNGRTGWFPSNYVREIKP) folds into the SH3 domain. Serine 225 carries the post-translational modification Phosphoserine. The DH domain occupies 241-421 (YYTVVLQNIL…KSLMGQCQDL (181 aa)). Positions 443-548 (DIKTLGNVIF…WMEQLNRLTK (106 aa)) constitute a PH domain. The residue at position 488 (serine 488) is a Phosphoserine. Residues 557–573 (SKTSSSSCSTHSSFSST) are compositionally biased toward low complexity. A disordered region spans residues 557 to 581 (SKTSSSSCSTHSSFSSTGQPRGPLE). Phosphoserine is present on residues serine 640 and serine 680.

In terms of assembly, interacts with PAK kinases through the SH3 domain. Interacts with GIT1. Interacts with PARVB. Component of cytoplasmic complexes, which also contain PXN, GIT1 and PAK1. Interacts with BIN2. Identified in a complex with BIN2 and GIT2. Interacts with PARVG; the guanine nucleotide exchange factor activity of ARHGEF6 is essential for PARVG-induced enhancement of cell spreading.

The protein resides in the cell projection. It localises to the lamellipodium. In terms of biological role, acts as a RAC1 guanine nucleotide exchange factor (GEF). This is Rho guanine nucleotide exchange factor 6 (Arhgef6) from Rattus norvegicus (Rat).